A 236-amino-acid chain; its full sequence is MSYNLTDPYEIARFIKESKKSTPVKVYVNGDLSKALMDDIEWYGANGFYILIGESDLIAKIILDNKHLIKHFRLENDRRNSAIPMLDLLEVDARIEPGAIIRDKVTIGKNAVVMMGAVINIGAEIGDGTMVDMNAVIGARGKLGKNVHLGAGAVVAGVLEPPSKEPCTIGDNVLIGANSVILEGVRIGSGSVVAAGSVVAEDVPEGVVVAGSPAKIIKLVDDKTKGKTQLLDDLRK.

Belongs to the transferase hexapeptide repeat family. DapH subfamily.

The catalysed reaction is (S)-2,3,4,5-tetrahydrodipicolinate + acetyl-CoA + H2O = L-2-acetamido-6-oxoheptanedioate + CoA. It functions in the pathway amino-acid biosynthesis; L-lysine biosynthesis via DAP pathway; LL-2,6-diaminopimelate from (S)-tetrahydrodipicolinate (acetylase route): step 1/3. Functionally, catalyzes the transfer of an acetyl group from acetyl-CoA to tetrahydrodipicolinate. This chain is 2,3,4,5-tetrahydropyridine-2,6-dicarboxylate N-acetyltransferase, found in Clostridium botulinum (strain Eklund 17B / Type B).